Here is a 395-residue protein sequence, read N- to C-terminus: NAD(P)H-quinone oxidoreductase subunit H (395 aa).

The protein belongs to the complex I 49 kDa subunit family. NDH-1 can be composed of about 15 different subunits; different subcomplexes with different compositions have been identified which probably have different functions.

It is found in the cellular thylakoid membrane. The catalysed reaction is a plastoquinone + NADH + (n+1) H(+)(in) = a plastoquinol + NAD(+) + n H(+)(out). It catalyses the reaction a plastoquinone + NADPH + (n+1) H(+)(in) = a plastoquinol + NADP(+) + n H(+)(out). NDH-1 shuttles electrons from an unknown electron donor, via FMN and iron-sulfur (Fe-S) centers, to quinones in the respiratory and/or the photosynthetic chain. The immediate electron acceptor for the enzyme in this species is believed to be plastoquinone. Couples the redox reaction to proton translocation, and thus conserves the redox energy in a proton gradient. Cyanobacterial NDH-1 also plays a role in inorganic carbon-concentration. The sequence is that of NAD(P)H-quinone oxidoreductase subunit H from Prochlorococcus marinus subsp. pastoris (strain CCMP1986 / NIES-2087 / MED4).